We begin with the raw amino-acid sequence, 1072 residues long: DNA-directed RNA polymerase subunit beta (1072 aa).

Belongs to the RNA polymerase beta chain family. In terms of assembly, in plastids the minimal PEP RNA polymerase catalytic core is composed of four subunits: alpha, beta, beta', and beta''. When a (nuclear-encoded) sigma factor is associated with the core the holoenzyme is formed, which can initiate transcription.

Its subcellular location is the plastid. It is found in the chloroplast. The enzyme catalyses RNA(n) + a ribonucleoside 5'-triphosphate = RNA(n+1) + diphosphate. In terms of biological role, DNA-dependent RNA polymerase catalyzes the transcription of DNA into RNA using the four ribonucleoside triphosphates as substrates. The polypeptide is DNA-directed RNA polymerase subunit beta (Amborella trichopoda).